The following is a 98-amino-acid chain: Ribonuclease kappa (98 aa).

A run of 2 helical transmembrane segments spans residues 13 to 33 and 65 to 85; these read ACGI…GIFF and VSYN…FSFC.

This sequence belongs to the RNase K family. As to quaternary structure, interacts with the proton translocation complex V0 of the V-ATPase. Interacts with ATP6AP1.

Its subcellular location is the endomembrane system. It localises to the cytoplasmic vesicle. The protein localises to the clathrin-coated vesicle membrane. Its function is as follows. Endoribonuclease which preferentially cleaves ApU and ApG phosphodiester bonds. Hydrolyzes UpU bonds at a lower rate. Regulates the activity of vacuolar (H+)-ATPase (V-ATPase) which is responsible for acidifying and maintaining the pH of intracellular compartments. Required at an early stage of receptor-mediated endocytosis. The protein is Ribonuclease kappa (Rnasek) of Mus musculus (Mouse).